Consider the following 262-residue polypeptide: Small ribosomal subunit protein uS2 (262 aa).

A disordered region spans residues 236 to 262 (AGGAAEAPAAEDVQTEEAAAPEADSAE).

The protein belongs to the universal ribosomal protein uS2 family.

In Psychrobacter sp. (strain PRwf-1), this protein is Small ribosomal subunit protein uS2.